The chain runs to 1548 residues: Lysine-specific demethylase 5D (1548 aa).

The JmjN domain occupies 14 to 55; sequence CPVFEPSWAEFRDPLGYIAKIRPIAEKSGICKIRPPADWQPP. Residues 79–169 form the ARID domain; it reads TRVKLNYLDQ…IIYPYEIFQS (91 aa). Residues lysine 205, lysine 229, lysine 244, and lysine 279 each participate in a glycyl lysine isopeptide (Lys-Gly) (interchain with G-Cter in SUMO2) cross-link. The interval 208–229 is disordered; that stretch reads CYSRRGKRLQPEPEPTEEDIEK. Serine 300 and serine 316 each carry phosphoserine. The PHD-type 1 zinc finger occupies 325–371; sequence VCRICSRGDEVDKFLLCDGCSDNYHIFCLLPPLSEVPKGVWRCPKCI. Tyrosine 439 provides a ligand contact to 2-oxoglutarate. The JmjC domain maps to 467–633; that stretch reads EYAACGWNLN…VGRQCIEHYR (167 aa). 2 residues coordinate Fe cation: histidine 513 and glutamate 515. 2-oxoglutarate is bound by residues serine 521, asparagine 523, and lysine 531. Histidine 601 lines the Fe cation pocket. The segment at 706 to 758 adopts a C5HC2 zinc-finger fold; it reads CIKCKTTCFLSALACYDCPDSLVCLSHINDLCKCSRNRQYLRYRYTLDELPAM. Residues serine 889 and serine 893 each carry the phosphoserine modification. Lysine 1123 participates in a covalent cross-link: Glycyl lysine isopeptide (Lys-Gly) (interchain with G-Cter in SUMO2). The PHD-type 2 zinc-finger motif lies at 1182-1243; the sequence is ICICGQVCAG…DTKFLCPLCM (62 aa). Serine 1355 is modified (phosphoserine). The segment at 1438–1468 is disordered; the sequence is KPENPGNWSEEQTPERRRQRRQKVVLSRKGE.

The protein belongs to the JARID1 histone demethylase family. Interacts withPCGF6, MSH5, ZMYND8, AR. L-ascorbate is required as a cofactor. It depends on Fe(2+) as a cofactor.

It is found in the nucleus. It catalyses the reaction N(6),N(6),N(6)-trimethyl-L-lysyl(4)-[histone H3] + 3 2-oxoglutarate + 3 O2 = L-lysyl(4)-[histone H3] + 3 formaldehyde + 3 succinate + 3 CO2. Histone demethylase that specifically demethylates 'Lys-4' of histone H3, thereby playing a central role in histone code. Does not demethylate histone H3 'Lys-9', H3 'Lys-27', H3 'Lys-36', H3 'Lys-79' or H4 'Lys-20'. Demethylates trimethylated and dimethylated but not monomethylated H3 'Lys-4'. May play a role in spermatogenesis. Involved in transcriptional repression of diverse metastasis-associated genes; in this function seems to cooperate with ZMYND8. Suppresses prostate cancer cell invasion. Regulates androgen receptor (AR) transcriptional activity by demethylating H3K4me3 active transcription marks. The sequence is that of Lysine-specific demethylase 5D (Kdm5d) from Mus musculus (Mouse).